Reading from the N-terminus, the 465-residue chain is L-seryl-tRNA(Sec) selenium transferase (465 aa).

Residue lysine 294 is modified to N6-(pyridoxal phosphate)lysine.

The protein belongs to the SelA family. Pyridoxal 5'-phosphate serves as cofactor.

It is found in the cytoplasm. The catalysed reaction is L-seryl-tRNA(Sec) + selenophosphate + H(+) = L-selenocysteinyl-tRNA(Sec) + phosphate. It participates in aminoacyl-tRNA biosynthesis; selenocysteinyl-tRNA(Sec) biosynthesis; selenocysteinyl-tRNA(Sec) from L-seryl-tRNA(Sec) (bacterial route): step 1/1. In terms of biological role, converts seryl-tRNA(Sec) to selenocysteinyl-tRNA(Sec) required for selenoprotein biosynthesis. The chain is L-seryl-tRNA(Sec) selenium transferase from Mannheimia succiniciproducens (strain KCTC 0769BP / MBEL55E).